Consider the following 207-residue polypeptide: Alpha-1-acid glycoprotein 1 (207 aa).

Residues 1–18 (MALHMILVMLSLLPLLEA) form the signal peptide. The residue at position 19 (Q19) is a Pyrrolidone carboxylic acid. N-linked (GlcNAc...) asparagine glycosylation is found at N25, N34, N76, N94, and N104. C91 and C184 are oxidised to a cystine.

It belongs to the calycin superfamily. Lipocalin family. In terms of tissue distribution, expressed by the liver and secreted in plasma.

The protein localises to the secreted. Its function is as follows. Functions as a transport protein in the blood stream. Binds various ligands in the interior of its beta-barrel domain. Appears to function in modulating the activity of the immune system during the acute-phase reaction. The sequence is that of Alpha-1-acid glycoprotein 1 (Orm1) from Mus caroli (Ryukyu mouse).